The chain runs to 101 residues: MTSKLAVALLAAFLLSAALCEGAVLPRSAKELRCECIKTYSKPFHPKFIKELRVIESGPHCANTEIIVKLSDGRELCLDPKEPWVQRVVEKFVKRAENQNP.

An N-terminal signal peptide occupies residues 1 to 22 (MTSKLAVALLAAFLLSAALCEG). Arginine 27 is modified (citrulline). Disulfide bonds link cysteine 34–cysteine 61 and cysteine 36–cysteine 77.

It belongs to the intercrine alpha (chemokine CxC) family. In terms of assembly, homodimer. Interacts with TNFAIP6 (via Link domain); this interaction interferes with chemokine binding to glycosaminoglycans. Citrullination at Arg-27 prevents proteolysis, and dampens tissue inflammation, it also enhances leukocytosis, possibly through impaired chemokine clearance from the blood circulation.

It is found in the secreted. Chemotactic factor that mediates inflammatory response by attracting neutrophils, basophils, and T-cells to clear pathogens and protect the host from infection. Also plays an important role in neutrophil activation. Released in response to an inflammatory stimulus, exerts its effect by binding to the G-protein-coupled receptors CXCR1 and CXCR2, primarily found in neutrophils, monocytes and endothelial cells. G-protein heterotrimer (alpha, beta, gamma subunits) constitutively binds to CXCR1/CXCR2 receptor and activation by IL8 leads to beta and gamma subunits release from Galpha (GNAI2 in neutrophils) and activation of several downstream signaling pathways including PI3K and MAPK pathways. The chain is Interleukin-8 (CXCL8) from Macaca mulatta (Rhesus macaque).